The following is a 500-amino-acid chain: Cytochrome P450 71D13 (500 aa).

The helical; Signal-anchor for type II membrane protein transmembrane segment at 3 to 23 (LQISSAIIILVVTYTISLLII) threads the bilayer. Cys439 lines the heme pocket.

Belongs to the cytochrome P450 family. Heme serves as cofactor.

It is found in the endoplasmic reticulum membrane. It carries out the reaction (4S)-limonene + reduced [NADPH--hemoprotein reductase] + O2 = (1S,6R)-isopiperitenol + oxidized [NADPH--hemoprotein reductase] + H2O + H(+). Its function is as follows. Hydroxylates (-)-(4S)-limonene to (-)-trans-isopiperitenol, a precursor of (-)-menthol, responsible for the cooling sensation of peppermint. The sequence is that of Cytochrome P450 71D13 (CYP71D13) from Mentha piperita (Peppermint).